We begin with the raw amino-acid sequence, 222 residues long: DNA-directed RNA polymerase V subunit 5A (222 aa).

It belongs to the archaeal Rpo5/eukaryotic RPB5 RNA polymerase subunit family. As to quaternary structure, component of the RNA polymerase V complex. As to expression, expressed in roots, leaves, siliques and seeds, and to a lower level, in flower buds and flowers.

The protein resides in the nucleus. DNA-dependent RNA polymerase catalyzes the transcription of DNA into RNA using the four ribonucleoside triphosphates as substrates. Component of RNA polymerase V involved in RNA-directed DNA methylation-dependent (RdDM) silencing of endogenous repeated sequences, including transposable elements. Required for establishment of DNA methylation. The sequence is that of DNA-directed RNA polymerase V subunit 5A (NRPE5A) from Arabidopsis thaliana (Mouse-ear cress).